The sequence spans 455 residues: 5'-nucleotidase domain-containing protein 1 (455 aa).

D16 (nucleophile) is an active-site residue. Residues D16 and D18 each contribute to the Mg(2+) site. The active-site Proton donor is the D18. K171 is modified (N6-acetyllysine). Position 313 (D313) interacts with Mg(2+). Residues 339-364 (GDEGTRSQRPEESEPLEKKGKYEGPK) show a composition bias toward basic and acidic residues. The interval 339–368 (GDEGTRSQRPEESEPLEKKGKYEGPKAKPL) is disordered.

The protein belongs to the 5'(3')-deoxyribonucleotidase family.

The sequence is that of 5'-nucleotidase domain-containing protein 1 (NT5DC1) from Homo sapiens (Human).